Here is a 46-residue protein sequence, read N- to C-terminus: Photosystem II reaction center protein Psb30 (46 aa).

Methionine 1 bears the N-formylmethionine mark. Topologically, residues 1 to 20 (MGIFNGIIEFLSNINFEVIA) are lumenal. A helical membrane pass occupies residues 21–38 (QLTMIAMIGIAGPMIIFL). Over 39 to 46 (LAVRRGNL) the chain is Cytoplasmic.

It belongs to the Psb30/Ycf12 family. As to quaternary structure, PSII is composed of 1 copy each of membrane proteins PsbA, PsbB, PsbC, PsbD, PsbE, PsbF, PsbH, PsbI, PsbJ, PsbK, PsbL, PsbM, PsbT, PsbX, PsbY, PsbZ, Psb30/Ycf12, peripheral proteins PsbO, CyanoQ (PsbQ), PsbU, PsbV and a large number of cofactors. It forms dimeric complexes. Part of a photosystem II (PSII) assembly intermediate complex PSII-I; crystallized from a strain deleted of psbJ, it forms monomeric PSII before addition of the oxygen evolving complex. PSII-I includes 3 assembly factors not found in mature PSII (Psb27, Psb28 and Psb34). It depends on PSII binds multiple chlorophylls, carotenoids and specific lipids. as a cofactor.

It localises to the cellular thylakoid membrane. A core subunit of photosystem II (PSII). PSII is a light-driven water plastoquinone oxidoreductase, using light energy to abstract electrons from H(2)O, generating a proton gradient subsequently used for ATP formation. Helps stabilize PSII. The sequence is that of Photosystem II reaction center protein Psb30 from Thermosynechococcus vestitus (strain NIES-2133 / IAM M-273 / BP-1).